The chain runs to 142 residues: Large ribosomal subunit protein uL11 (142 aa).

It belongs to the universal ribosomal protein uL11 family. As to quaternary structure, part of the ribosomal stalk of the 50S ribosomal subunit. Interacts with L10 and the large rRNA to form the base of the stalk. L10 forms an elongated spine to which L12 dimers bind in a sequential fashion forming a multimeric L10(L12)X complex. One or more lysine residues are methylated.

Forms part of the ribosomal stalk which helps the ribosome interact with GTP-bound translation factors. This is Large ribosomal subunit protein uL11 from Leptospira interrogans serogroup Icterohaemorrhagiae serovar copenhageni (strain Fiocruz L1-130).